The chain runs to 407 residues: Protein-glutamine gamma-glutamyltransferase (407 aa).

The first 31 residues, Met1–Ala31, serve as a signal peptide directing secretion. The propeptide occupies Asp32–Pro76. Low complexity predominate over residues Ser62–Ser72. The segment at Ser62–Pro98 is disordered. Positions Pro76–Asp94 are enriched in basic and acidic residues. Residue Cys140 is part of the active site. The segment at Gln282 to Ser322 is disordered. Basic and acidic residues predominate over residues Ser286–Ala298. Active-site residues include Asp331 and His350.

This sequence belongs to the bacterial TGase family.

It carries out the reaction L-glutaminyl-[protein] + L-lysyl-[protein] = [protein]-L-lysyl-N(6)-5-L-glutamyl-[protein] + NH4(+). Functionally, catalyzes the cross-linking of proteins and the conjugation of polyamines to proteins. The sequence is that of Protein-glutamine gamma-glutamyltransferase from Streptomyces mobaraensis (Streptoverticillium mobaraense).